A 794-amino-acid polypeptide reads, in one-letter code: LPS-assembly protein LptD (794 aa).

An N-terminal signal peptide occupies residues 1 to 31; the sequence is MPSHCSSLLCARFRLSSLAVIVALAASGVRA.

Belongs to the LptD family. As to quaternary structure, component of the lipopolysaccharide transport and assembly complex. Interacts with LptE and LptA.

The protein resides in the cell outer membrane. In terms of biological role, together with LptE, is involved in the assembly of lipopolysaccharide (LPS) at the surface of the outer membrane. This chain is LPS-assembly protein LptD, found in Marinobacter nauticus (strain ATCC 700491 / DSM 11845 / VT8) (Marinobacter aquaeolei).